The sequence spans 101 residues: Large ribosomal subunit protein uL24 (101 aa).

Belongs to the universal ribosomal protein uL24 family. In terms of assembly, part of the 50S ribosomal subunit.

Its function is as follows. One of two assembly initiator proteins, it binds directly to the 5'-end of the 23S rRNA, where it nucleates assembly of the 50S subunit. One of the proteins that surrounds the polypeptide exit tunnel on the outside of the subunit. This Borreliella burgdorferi (strain ATCC 35210 / DSM 4680 / CIP 102532 / B31) (Borrelia burgdorferi) protein is Large ribosomal subunit protein uL24.